Reading from the N-terminus, the 498-residue chain is Glycerol kinase (498 aa).

Position 14 (Thr14) interacts with ADP. Residues Thr14 and Thr15 each coordinate ATP. Thr14 provides a ligand contact to sn-glycerol 3-phosphate. Position 18 (Arg18) interacts with ADP. Sn-glycerol 3-phosphate contacts are provided by Arg84, Glu85, Tyr136, and Asp246. Residues Arg84, Glu85, Tyr136, Asp246, and Gln247 each coordinate glycerol. ADP is bound by residues Thr268 and Gly311. Thr268, Gly311, Gln315, and Gly412 together coordinate ATP. Residues Gly412 and Asn416 each coordinate ADP.

This sequence belongs to the FGGY kinase family.

It catalyses the reaction glycerol + ATP = sn-glycerol 3-phosphate + ADP + H(+). It participates in polyol metabolism; glycerol degradation via glycerol kinase pathway; sn-glycerol 3-phosphate from glycerol: step 1/1. Inhibited by fructose 1,6-bisphosphate (FBP). In terms of biological role, key enzyme in the regulation of glycerol uptake and metabolism. Catalyzes the phosphorylation of glycerol to yield sn-glycerol 3-phosphate. The polypeptide is Glycerol kinase (Leptospira biflexa serovar Patoc (strain Patoc 1 / Ames)).